Reading from the N-terminus, the 410-residue chain is Magnesium transporter NIPA3 (410 aa).

The Extracellular portion of the chain corresponds to 1–67 (MGAQVRLPPG…ISANVENKYS (67 aa)). 3 N-linked (GlcNAc...) asparagine glycosylation sites follow: asparagine 25, asparagine 35, and asparagine 50. A helical membrane pass occupies residues 68–88 (LYVGLVLAVSSSIFIGSSFIL). The Cytoplasmic portion of the chain corresponds to 89 to 114 (KKKGLLQLASKGITRAGQGGHSYLKE). Residues 115–135 (WLWWVGLLSMGVGEAANFAAY) form a helical membrane-spanning segment. Position 136 (alanine 136) is a topological domain, extracellular. Residues 137–157 (FAPATLVTPLGALSVLISAIL) traverse the membrane as a helical segment. The Cytoplasmic segment spans residues 158 to 165 (SSYFLNEH). Residues 166 to 186 (LNIHGKIGCILSILGSTVMVI) traverse the membrane as a helical segment. The Extracellular portion of the chain corresponds to 187 to 207 (HAPQEEEVTSLHEMEMKLRDP). The chain crosses the membrane as a helical span at residues 208–228 (GFISFAVIVTVISLVLILIVA). Over 229-233 (PKKGQ) the chain is Cytoplasmic. A helical membrane pass occupies residues 234–254 (TNILVYISICSLIGAFSVSSV). At 255-273 (KGLGIAIKELIEWKPVYKH) the chain is on the extracellular side. Residues 274–294 (PLVFVLLAVLVLSVTTQINYL) traverse the membrane as a helical segment. At 295–304 (NKALDTFNTS) the chain is on the cytoplasmic side. A helical membrane pass occupies residues 305-325 (IVTPIYYVFFTSMVVTCSAIL). Topologically, residues 326-336 (FQEWYGMTAGD) are extracellular. A helical transmembrane segment spans residues 337–357 (IIGTLSGFFTIIIGIFLLHAF). At 358–410 (KNTDITWSELTSTAKKEAVSLNVSENNYVLLENLECSAPGYNDDVTLFSRTDD) the chain is on the cytoplasmic side.

Belongs to the NIPA family.

The protein resides in the golgi apparatus membrane. It carries out the reaction Mg(2+)(in) = Mg(2+)(out). In terms of biological role, acts as a Mg(2+) transporter. Can also transport other divalent cations such as Fe(2+), Sr(2+), Ba(2+), Mn(2+), Cu(2+) and Co(2+) but to a much less extent than Mg(2+). This Pongo abelii (Sumatran orangutan) protein is Magnesium transporter NIPA3 (NIPAL1).